We begin with the raw amino-acid sequence, 89 residues long: FMRFamide-like neuropeptides 19 (89 aa).

Positions 1–20 (MSFQLTLFSMLFLLIAVVVG) are cleaved as a signal peptide. Positions 21–67 (QPIQSQNGDLKMQAVQDNSPLNMEAFNDDSALYDYLEQSDPSLKSME) are excised as a propeptide. A Phenylalanine amide modification is found at phenylalanine 76. A propeptide spanning residues 80-89 (ASWASSVRFG) is cleaved from the precursor.

It belongs to the FARP (FMRFamide related peptide) family. As to expression, each flp gene is expressed in a distinct set of neurons. Flp-19 is expressed in the URX interneurons, the serotonin and acetylcholine-expressing HSN neurons, and the AIN, AWA and BAG neurons.

The protein resides in the secreted. FMRFamides and FMRFamide-like peptides are neuropeptides. WANQVRF-amide inhibits the activity of dissected pharyngeal myogenic muscle system. The protein is FMRFamide-like neuropeptides 19 of Caenorhabditis elegans.